The primary structure comprises 1225 residues: uncharacterized protein (1225 aa).

Positions 1–27 (MKRFLHRVKWPLLLSSIAVSLGIVAVA) are cleaved as a signal peptide. Residue Cys28 is the site of N-palmitoyl cysteine attachment. Residue Cys28 is the site of S-diacylglycerol cysteine attachment. The disordered stretch occupies residues 995 to 1014 (QSEKSSSNGGQAQLQSTQSS).

It belongs to the MG307/MG309/MG338 family.

It localises to the cell membrane. This is an uncharacterized protein from Mycoplasma genitalium (strain ATCC 33530 / DSM 19775 / NCTC 10195 / G37) (Mycoplasmoides genitalium).